Here is a 237-residue protein sequence, read N- to C-terminus: Proteasome subunit beta 2 (237 aa).

Residues methionine 1–aspartate 14 are compositionally biased toward polar residues. A propeptide spans methionine 1–glycine 42 (removed in mature form; by autocatalysis). The tract at residues methionine 1–threonine 45 is disordered. The active-site Nucleophile is the threonine 43.

This sequence belongs to the peptidase T1B family. The 20S proteasome core is composed of 14 alpha and 14 beta subunits that assemble into four stacked heptameric rings, resulting in a barrel-shaped structure. The two inner rings, each composed of seven catalytic beta subunits, are sandwiched by two outer rings, each composed of seven alpha subunits. The catalytic chamber with the active sites is on the inside of the barrel. Has a gated structure, the ends of the cylinder being occluded by the N-termini of the alpha-subunits. Is capped at one or both ends by the proteasome regulatory ATPase, PAN.

It localises to the cytoplasm. The catalysed reaction is Cleavage of peptide bonds with very broad specificity.. With respect to regulation, the formation of the proteasomal ATPase PAN-20S proteasome complex, via the docking of the C-termini of PAN into the intersubunit pockets in the alpha-rings, triggers opening of the gate for substrate entry. Interconversion between the open-gate and close-gate conformations leads to a dynamic regulation of the 20S proteasome proteolysis activity. Functionally, component of the proteasome core, a large protease complex with broad specificity involved in protein degradation. The chain is Proteasome subunit beta 2 from Haloterrigena turkmenica (strain ATCC 51198 / DSM 5511 / JCM 9101 / NCIMB 13204 / VKM B-1734 / 4k) (Halococcus turkmenicus).